The primary structure comprises 126 residues: Prefoldin subunit beta (126 aa).

It belongs to the prefoldin subunit beta family. In terms of assembly, heterohexamer of two alpha and four beta subunits.

The protein localises to the cytoplasm. Functionally, molecular chaperone capable of stabilizing a range of proteins. Seems to fulfill an ATP-independent, HSP70-like function in archaeal de novo protein folding. This is Prefoldin subunit beta from Pyrobaculum neutrophilum (strain DSM 2338 / JCM 9278 / NBRC 100436 / V24Sta) (Thermoproteus neutrophilus).